A 605-amino-acid chain; its full sequence is Capsid scaffolding protein (605 aa).

Residues His48, Ser116, and His139 each act as charge relay system in the active site. The interval 235-274 is disordered; sequence ASDAPDLQKPDKALQSPPPASTDPATMLSGNAGEGATACG. The tract at residues 281 to 300 is interaction with pAP; sequence QDLISVPRNTFMTLLQTNLD. Disordered regions lie at residues 403–432 and 489–588; these read DYVPAPSRSNKRKRDPEEDEEGGGLFPGED and PHQS…KSVS. Residues 410–416 carry the Nuclear localization signal motif; that stretch reads RSNKRKR. The span at 568-579 shows a compositional bias: polar residues; it reads ASASGVAQSKEP. An interaction with major capsid protein region spans residues 585 to 605; the sequence is KSVSAHLKSIFCEELLNKRVA.

The protein belongs to the herpesviridae capsid scaffolding protein family. Homomultimer. Interacts with major capsid protein. As to quaternary structure, exists in a monomer-dimer equilibrium with the dimer being the active species. Post-translationally, capsid scaffolding protein is cleaved by assemblin after formation of the spherical procapsid. As a result, the capsid obtains its mature, icosahedral shape. Cleavages occur at two or more sites: release (R-site) and maturation (M-site).

Its subcellular location is the host cytoplasm. The protein localises to the host nucleus. It catalyses the reaction Cleaves -Ala-|-Ser- and -Ala-|-Ala- bonds in the scaffold protein.. Its function is as follows. Acts as a scaffold protein by binding major capsid protein in the cytoplasm, inducing the nuclear localization of both proteins. Multimerizes in the nucleus such as major capsid protein forms the icosahedral T=16 capsid. Autocatalytic cleavage releases the assembly protein, and subsequently abolishes interaction with major capsid protein. Cleavages products are evicted from the capsid before or during DNA packaging. Protease that plays an essential role in virion assembly within the nucleus. Catalyzes the cleavage of the assembly protein after formation of the spherical procapsid. By that cleavage, the capsid matures and gains its icosahedral shape. The cleavage sites seem to include -Ala-Ser-, -Ala-Ala-, as well as Ala-Thr bonds. Assemblin and cleavages products are evicted from the capsid before or during DNA packaging. In terms of biological role, plays a major role in capsid assembly. Acts as a scaffold protein by binding major capsid protein. Multimerizes in the nucleus such as major capsid protein forms the icosahedral T=16 capsid. Cleaved by assemblin after capsid completion. The cleavages products are evicted from the capsid before or during DNA packaging. This Homo sapiens (Human) protein is Capsid scaffolding protein.